We begin with the raw amino-acid sequence, 126 residues long: Small ribosomal subunit protein uS13 (126 aa).

Positions 94–126 (RNLPVHGQRTHTNARTRKGPRRAIAGKKKAGKK) are disordered.

It belongs to the universal ribosomal protein uS13 family. As to quaternary structure, part of the 30S ribosomal subunit. Forms a loose heterodimer with protein S19. Forms two bridges to the 50S subunit in the 70S ribosome.

Its function is as follows. Located at the top of the head of the 30S subunit, it contacts several helices of the 16S rRNA. In the 70S ribosome it contacts the 23S rRNA (bridge B1a) and protein L5 of the 50S subunit (bridge B1b), connecting the 2 subunits; these bridges are implicated in subunit movement. Contacts the tRNAs in the A and P-sites. This is Small ribosomal subunit protein uS13 from Parafrankia sp. (strain EAN1pec).